A 343-amino-acid polypeptide reads, in one-letter code: MKYLSIKSASDKIKSGLLKTGVILSFSLFSSLSTAAFEVVALGVDGGVSDGNLTSYLIRNDSQPLYLGLDAGSVLPGIARALEKGHFAAITDAMAAPLTRQGYIFRQSINSYFISHAHLDHVSGLIIGSPDDSKKTIYASADTIDVLRNYYFNWRVWPNFTDSGSGARLGTYRMQVVRPAQSLSLGLTRLTGEMYPLSHDKSPSSMLLISSNNEFFAYFGDTGPDDVEKSKNLDTVWRKLAEKVTQQQLKGMIIEVSYPNDVADNKLFGHMTPTWLLKELKKLEQYSGEGQPLKGLPVVISHIKPSFQQGQDVRKLILSELQQGNDMGIEFILMEQGDSQKFQ.

The first 36 residues, 1 to 36 (MKYLSIKSASDKIKSGLLKTGVILSFSLFSSLSTAA), serve as a signal peptide directing secretion.

It belongs to the cyclic nucleotide phosphodiesterase class-II family.

It is found in the periplasm. It carries out the reaction a nucleoside 3',5'-cyclic phosphate + H2O = a nucleoside 5'-phosphate + H(+). In Yersinia pestis, this protein is Probable 3',5'-cyclic-nucleotide phosphodiesterase (cpdP).